The chain runs to 877 residues: Probable alpha/beta-glucosidase agdC (877 aa).

A signal peptide spans Met-1–Ala-14. 3 N-linked (GlcNAc...) asparagine glycosylation sites follow: Asn-171, Asn-293, and Asn-373. The active-site Nucleophile is Asp-422. Glu-425 is a catalytic residue. The segment at Asp-432 to Ser-476 is disordered. Over residues Pro-447–Gly-463 the composition is skewed to pro residues. N-linked (GlcNAc...) asparagine glycosylation occurs at Asn-508. The active-site Proton donor is Asp-573. Residues Asn-574, Asn-610, and Asn-744 are each glycosylated (N-linked (GlcNAc...) asparagine).

It belongs to the glycosyl hydrolase 31 family.

The protein resides in the secreted. It catalyses the reaction Hydrolysis of terminal, non-reducing (1-&gt;4)-linked alpha-D-glucose residues with release of alpha-D-glucose.. It carries out the reaction Hydrolysis of terminal, non-reducing beta-D-glucosyl residues with release of beta-D-glucose.. Functionally, glucosidase involved in the degradation of cellulosic biomass. Has both alpha- and beta-glucosidase activity. The polypeptide is Probable alpha/beta-glucosidase agdC (agdC) (Aspergillus oryzae (strain ATCC 42149 / RIB 40) (Yellow koji mold)).